Consider the following 171-residue polypeptide: Large ribosomal subunit protein bL17 (171 aa).

A compositionally biased stretch (basic and acidic residues) spans 140 to 152 (KREIQTKAREEKR). Residues 140–171 (KREIQTKAREEKRATRKSNSAPVSKETTSKKK) form a disordered region. Positions 156 to 165 (KSNSAPVSKE) are enriched in polar residues.

This sequence belongs to the bacterial ribosomal protein bL17 family. As to quaternary structure, part of the 50S ribosomal subunit. Contacts protein L32.

This Leptospira interrogans serogroup Icterohaemorrhagiae serovar copenhageni (strain Fiocruz L1-130) protein is Large ribosomal subunit protein bL17.